Here is a 278-residue protein sequence, read N- to C-terminus: Urease accessory protein UreD (278 aa).

This sequence belongs to the UreD family. In terms of assembly, ureD, UreF and UreG form a complex that acts as a GTP-hydrolysis-dependent molecular chaperone, activating the urease apoprotein by helping to assemble the nickel containing metallocenter of UreC. The UreE protein probably delivers the nickel.

It localises to the cytoplasm. In terms of biological role, required for maturation of urease via the functional incorporation of the urease nickel metallocenter. This chain is Urease accessory protein UreD, found in Deinococcus radiodurans (strain ATCC 13939 / DSM 20539 / JCM 16871 / CCUG 27074 / LMG 4051 / NBRC 15346 / NCIMB 9279 / VKM B-1422 / R1).